The following is a 286-amino-acid chain: Protein Bride of doubletime (286 aa).

Interacts with dco (via nuclear localization signal). Interacts with Ankrd49; interaction promotes the stability of both complex members.

It is found in the cytoplasm. Its subcellular location is the cytosol. It localises to the cell membrane. Functions in planar polarity establishment and circadian rhythms by promoting the activity and localization of dco/dbt. Required for regulating the levels of dco/dbt and per in the nuclei of photoreceptor cells and thereby is involved in normal oscillations of the circadian clock proteins in the eye. In the dark, the cry circadian and rhodopsin visual pathways, activate the accumulation of the protein into Arr1- and Arr2-dependent cytosolic foci which are required for dco localization to photoreceptor nuclei. It is possible that the accumulation into foci results in the dissociation of the protein from dco, thus allowing dco to interact with importins and microtubles for nuclear transport. By promoting nuclei localization and kinase activity of dco towards per, it is essential for regulating normal cycles of per nuclear accumulation in brain circadian neurons and thus is important for normal circadian behavior. Essential for regulating the establishment of planar cell polarity in the wing. Forms a complex with Ankrd49 which likely functions in the regulation of planar polarity by promoting the activity of dco during planar polarity establishment. Within the complex, directly promotes dco activity in regulating phosphorylation and asymmetric localization of core planar polarity proteins such as dsh. This chain is Protein Bride of doubletime, found in Drosophila melanogaster (Fruit fly).